We begin with the raw amino-acid sequence, 191 residues long: MKDKHNQEHDHLSQEEPESCEKACACKEQQGEEMQEASGKECEIKEDFELKYQEMHEKYLRVHADFENVKKRLERDKSMALEYAYEKIALDLLPVIDALLGAHRSAAEVDKESALTKGLELTMEKLHEVLARHGIEGIECLEEFDPNFHNAIMQVKSEEKENGKIVQVLQQGYKYKGRVLRPAMVSIAKND.

The segment at 1–22 (MKDKHNQEHDHLSQEEPESCEK) is disordered.

It belongs to the GrpE family. As to quaternary structure, homodimer.

Its subcellular location is the cytoplasm. Participates actively in the response to hyperosmotic and heat shock by preventing the aggregation of stress-denatured proteins, in association with DnaK and GrpE. It is the nucleotide exchange factor for DnaK and may function as a thermosensor. Unfolded proteins bind initially to DnaJ; upon interaction with the DnaJ-bound protein, DnaK hydrolyzes its bound ATP, resulting in the formation of a stable complex. GrpE releases ADP from DnaK; ATP binding to DnaK triggers the release of the substrate protein, thus completing the reaction cycle. Several rounds of ATP-dependent interactions between DnaJ, DnaK and GrpE are required for fully efficient folding. The polypeptide is Protein GrpE (Helicobacter pylori (strain Shi470)).